The primary structure comprises 356 residues: UDP-N-acetylglucosamine--N-acetylmuramyl-(pentapeptide) pyrophosphoryl-undecaprenol N-acetylglucosamine transferase (356 aa).

UDP-N-acetyl-alpha-D-glucosamine contacts are provided by arginine 166, serine 196, and glutamine 290.

The protein belongs to the glycosyltransferase 28 family. MurG subfamily.

Its subcellular location is the cell membrane. It catalyses the reaction Mur2Ac(oyl-L-Ala-gamma-D-Glu-L-Lys-D-Ala-D-Ala)-di-trans,octa-cis-undecaprenyl diphosphate + UDP-N-acetyl-alpha-D-glucosamine = beta-D-GlcNAc-(1-&gt;4)-Mur2Ac(oyl-L-Ala-gamma-D-Glu-L-Lys-D-Ala-D-Ala)-di-trans,octa-cis-undecaprenyl diphosphate + UDP + H(+). It functions in the pathway cell wall biogenesis; peptidoglycan biosynthesis. Its function is as follows. Cell wall formation. Catalyzes the transfer of a GlcNAc subunit on undecaprenyl-pyrophosphoryl-MurNAc-pentapeptide (lipid intermediate I) to form undecaprenyl-pyrophosphoryl-MurNAc-(pentapeptide)GlcNAc (lipid intermediate II). In Staphylococcus aureus (strain bovine RF122 / ET3-1), this protein is UDP-N-acetylglucosamine--N-acetylmuramyl-(pentapeptide) pyrophosphoryl-undecaprenol N-acetylglucosamine transferase.